A 358-amino-acid polypeptide reads, in one-letter code: Probable butyrate kinase (358 aa).

The protein belongs to the acetokinase family.

The protein localises to the cytoplasm. The enzyme catalyses butanoate + ATP = butanoyl phosphate + ADP. The protein is Probable butyrate kinase of Oceanobacillus iheyensis (strain DSM 14371 / CIP 107618 / JCM 11309 / KCTC 3954 / HTE831).